Consider the following 863-residue polypeptide: FO synthase (863 aa).

2 Radical SAM core domains span residues 91-343 (ITYS…APPN) and 551-792 (VTFV…SHIQ). Residues 92–424 (TYSRKVFIPV…PRVRGHVVAL (333 aa)) are cofG-like. [4Fe-4S] cluster contacts are provided by Cys105, Cys109, Cys112, Cys565, Cys569, and Cys572. Residues 528–861 (DGPALEAVTA…RQRTTTYALR (334 aa)) are cofH-like.

This sequence in the N-terminal section; belongs to the radical SAM superfamily. CofG family. The protein in the C-terminal section; belongs to the radical SAM superfamily. CofH family. The cofactor is [4Fe-4S] cluster.

It carries out the reaction 5-amino-6-(D-ribitylamino)uracil + L-tyrosine + S-adenosyl-L-methionine = 5-amino-5-(4-hydroxybenzyl)-6-(D-ribitylimino)-5,6-dihydrouracil + 2-iminoacetate + 5'-deoxyadenosine + L-methionine + H(+). The catalysed reaction is 5-amino-5-(4-hydroxybenzyl)-6-(D-ribitylimino)-5,6-dihydrouracil + S-adenosyl-L-methionine = 7,8-didemethyl-8-hydroxy-5-deazariboflavin + 5'-deoxyadenosine + L-methionine + NH4(+) + H(+). The protein operates within cofactor biosynthesis; coenzyme F0 biosynthesis. In terms of biological role, catalyzes the radical-mediated synthesis of 7,8-didemethyl-8-hydroxy-5-deazariboflavin (FO) from 5-amino-6-(D-ribitylamino)uracil and L-tyrosine. This is FO synthase (fbiC) from Mycobacterium leprae (strain TN).